Reading from the N-terminus, the 421-residue chain is Protein ECERIFERUM 2 (421 aa).

At M1 the chain carries N-acetylmethionine.

The protein belongs to the plant acyltransferase family. In terms of tissue distribution, expressed at high levels in the epidermis of stems and young siliques. Expressed in flowers.

The protein localises to the endoplasmic reticulum. The protein resides in the nucleus. Functionally, involved in biosynthesis of the epicuticular wax. Plays a role in very-long-chain fatty acid (VLCFA) biosynthesis and is required for C28 fatty acid elongation in stem. Despite its classification as a BAHD acyltransferase based on sequence homology, CER2 does not seem to share the catalytic mechanism of the members of the BAHD family. This Arabidopsis thaliana (Mouse-ear cress) protein is Protein ECERIFERUM 2 (CER2).